Consider the following 662-residue polypeptide: Leucine aminopeptidase 2 (662 aa).

A peptide-binding positions include 178 to 180 (QLE) and 304 to 309 (PYGGME). Residue H333 coordinates Zn(2+). The active-site Proton acceptor is the E334. H337 and E356 together coordinate Zn(2+). The active-site Proton donor is Y422.

The protein belongs to the peptidase M1 family. It depends on Zn(2+) as a cofactor.

It localises to the cytoplasm. Its subcellular location is the nucleus. It catalyses the reaction an epoxide + H2O = an ethanediol. Aminopeptidase that preferentially cleaves di- and tripeptides. Also has low epoxide hydrolase activity (in vitro). Can hydrolyze the epoxide leukotriene LTA(4) but it forms preferentially 5,6-dihydroxy-7,9,11,14-eicosatetraenoic acid rather than the cytokine leukotriene B(4) as the product compared to the homologous mammalian enzyme (in vitro). The sequence is that of Leucine aminopeptidase 2 from Kluyveromyces lactis (strain ATCC 8585 / CBS 2359 / DSM 70799 / NBRC 1267 / NRRL Y-1140 / WM37) (Yeast).